An 826-amino-acid chain; its full sequence is E3 ubiquitin ligase PARAQUAT TOLERANCE 3 (826 aa).

The DWNN domain occupies 3-76 (IYYKFKSARD…NTSVLIRRVP (74 aa)). The segment at 203 to 216 (CHRCNVSGHFIQHC) adopts a CCHC-type zinc-finger fold. S278 is subject to Phosphoserine. An RING-type; degenerate zinc finger spans residues 288 to 326 (CPLCKEVMRDAALASKCCLKSYCDKCIRDHIIAKSMCVC). Polar residues-rich tracts occupy residues 356–365 (SAENAGSMCQ), 396–406 (PSNNNETSTLK), and 435–454 (NIQG…NTQP). 3 disordered regions span residues 356–406 (SAEN…STLK), 435–488 (NIQG…GPDY), and 585–826 (HPIM…RARA). At S397 the chain carries Phosphoserine. Basic and acidic residues predominate over residues 588-624 (MGREEFEAKKTEMKRKRENEIRRSEGGNVVRDSEKSR). Residues 625–635 (IMNNSAVTSSP) are compositionally biased toward polar residues. Over residues 651–667 (DYDRRRRSDRSSPERQS) the composition is skewed to basic and acidic residues. Short sequence motifs (nuclear localization signal) lie at residues 668–675 (SRRFTSPP) and 695–702 (DRRRDRPR). Residues 680 to 706 (RKSERDRHHDLDSEHDRRRDRPRETDR) show a composition bias toward basic and acidic residues. Over residues 790–799 (FKRKPSRYKR) the composition is skewed to basic residues. Phosphoserine is present on S800. Residues 809–826 (GDEHFRHSKRSKGERARA) show a composition bias toward basic and acidic residues.

As to quaternary structure, interacts with PRMT13/PRMT4B in the nucleus. In terms of tissue distribution, expressed constitutively in both shoot and root tissues.

The protein resides in the nucleus. The enzyme catalyses S-ubiquitinyl-[E2 ubiquitin-conjugating enzyme]-L-cysteine + [acceptor protein]-L-lysine = [E2 ubiquitin-conjugating enzyme]-L-cysteine + N(6)-ubiquitinyl-[acceptor protein]-L-lysine.. In terms of biological role, E3 ubiquitin ligase acting as a negative regulator of oxidative stress tolerance, probably by mediating 26S proteasome-mediated degradation of PRMT13/PRMT4B, thus preventing APX1 and GPX1 accumulation via the reduction of histone H3 methylation (H3R17me2a). Confers sensitivity to cadmium CdCl(2) and salt NaCl stresses. In Arabidopsis thaliana (Mouse-ear cress), this protein is E3 ubiquitin ligase PARAQUAT TOLERANCE 3.